Here is a 136-residue protein sequence, read N- to C-terminus: Orexigenic neuropeptide QRFP (136 aa).

Positions 1–18 (MVRPYPLIYFLFLPLGAC) are cleaved as a signal peptide. Residues 19-90 (FPLLDRREPT…HAGCRFRFGR (72 aa)) constitute a propeptide that is removed on maturation. At Gln-91 the chain carries Pyrrolidone carboxylic acid. Phe-133 carries the phenylalanine amide modification.

The protein belongs to the RFamide neuropeptide family. Ligand for the G-protein coupled receptor QRFPR/GPR103. Expressed widely in the brain with highest expression levels in the cerebellum, medulla, pituitary, retina, vestibular nucleus, and white matter. Also expressed in the bladder, colon, coronary artery, parathyroid gland, prostate, testis, and thyroid.

It localises to the secreted. Functionally, stimulates feeding behavior, metabolic rate and locomotor activity and increases blood pressure. May have orexigenic activity. May promote aldosterone secretion by the adrenal gland. In Homo sapiens (Human), this protein is Orexigenic neuropeptide QRFP.